A 71-amino-acid polypeptide reads, in one-letter code: Putative membrane protein insertion efficiency factor (71 aa).

Belongs to the UPF0161 family.

The protein resides in the cell membrane. Its function is as follows. Could be involved in insertion of integral membrane proteins into the membrane. The chain is Putative membrane protein insertion efficiency factor from Ruminiclostridium cellulolyticum (strain ATCC 35319 / DSM 5812 / JCM 6584 / H10) (Clostridium cellulolyticum).